A 254-amino-acid chain; its full sequence is Syntaxin-6 (254 aa).

Topologically, residues 1-233 (MSMEDPFFVV…VSHMTSDRRQ (233 aa)) are cytoplasmic. A coiled-coil region spans residues 46-72 (TTNELRNNLRSIEWDLEDLDETISIVE). The interval 103–138 (KDQMSNSSMQALAERKNRQALLGESSSQSWSSGPDK) is disordered. One can recognise a t-SNARE coiled-coil homology domain in the interval 162–224 (QLIVEQQDEQ…DNVMKKLAKV (63 aa)). A helical; Anchor for type IV membrane protein transmembrane segment spans residues 234-254 (WCAIIVLFVILLVVLVLFLVL).

It belongs to the syntaxin family.

The protein resides in the golgi apparatus membrane. It localises to the golgi apparatus. It is found in the trans-Golgi network membrane. The protein localises to the recycling endosome membrane. In terms of biological role, SNARE promoting movement of transport vesicles to target membranes. Targets endosomes to the trans-Golgi network, and may therefore function in retrograde trafficking. Together with SNARE STX12, promotes movement of vesicles from endosomes to the cell membrane, and may therefore function in the endocytic recycling pathway. In Gallus gallus (Chicken), this protein is Syntaxin-6 (STX6).